Consider the following 119-residue polypeptide: Inner membrane protein YijD (119 aa).

Topologically, residues 1 to 8 (MKQANQDR) are cytoplasmic. A helical membrane pass occupies residues 9–28 (GTLLLALVAGLSINGTFAAL). Over 29 to 31 (FSS) the chain is Periplasmic. A helical membrane pass occupies residues 32–50 (IVPFSVFPIISLVLTVYCL). Residues 51–61 (HQRYLNRTMPV) are Cytoplasmic-facing. Residues 62–84 (GLPGLAAACFILGVLLYSTVVRA) traverse the membrane as a helical segment. Residues 85-88 (EYPD) are Periplasmic-facing. A helical transmembrane segment spans residues 89 to 108 (IGSNFFPAVLSVIMVFWIGA). Residues 109-119 (KMRNRKQEVAE) lie on the Cytoplasmic side of the membrane.

The protein localises to the cell inner membrane. The protein is Inner membrane protein YijD (yijD) of Escherichia coli O6:H1 (strain CFT073 / ATCC 700928 / UPEC).